Consider the following 513-residue polypeptide: Probable DNA ligase (513 aa).

E213 is an ATP binding site. K215 functions as the N6-AMP-lysine intermediate in the catalytic mechanism. ATP is bound by residues R220, R235, E264, F304, R376, and K382.

It belongs to the ATP-dependent DNA ligase family. Mg(2+) serves as cofactor.

The enzyme catalyses ATP + (deoxyribonucleotide)n-3'-hydroxyl + 5'-phospho-(deoxyribonucleotide)m = (deoxyribonucleotide)n+m + AMP + diphosphate.. Functionally, DNA ligase that seals nicks in double-stranded DNA during DNA replication, DNA recombination and DNA repair. The protein is Probable DNA ligase of Anaeromyxobacter sp. (strain K).